We begin with the raw amino-acid sequence, 457 residues long: tRNA modification GTPase MnmE (457 aa).

Arginine 24, glutamate 81, and lysine 121 together coordinate (6S)-5-formyl-5,6,7,8-tetrahydrofolate. Positions 218 to 380 constitute a TrmE-type G domain; it reads GIKIVITGKP…LLKYLTKIIS (163 aa). Asparagine 228 contacts K(+). Residues 228–233, 247–253, 272–275, and 338–341 contribute to the GTP site; these read NVGKSS, TNIAGTT, DTAG, and NKAD. A Mg(2+)-binding site is contributed by serine 232. Residues threonine 247, isoleucine 249, and threonine 252 each contribute to the K(+) site. Residue threonine 253 participates in Mg(2+) binding. Position 457 (lysine 457) interacts with (6S)-5-formyl-5,6,7,8-tetrahydrofolate.

This sequence belongs to the TRAFAC class TrmE-Era-EngA-EngB-Septin-like GTPase superfamily. TrmE GTPase family. Homodimer. Heterotetramer of two MnmE and two MnmG subunits. K(+) serves as cofactor.

The protein localises to the cytoplasm. Its function is as follows. Exhibits a very high intrinsic GTPase hydrolysis rate. Involved in the addition of a carboxymethylaminomethyl (cmnm) group at the wobble position (U34) of certain tRNAs, forming tRNA-cmnm(5)s(2)U34. This Baumannia cicadellinicola subsp. Homalodisca coagulata protein is tRNA modification GTPase MnmE.